The chain runs to 389 residues: Methylthioribose-1-phosphate isomerase (389 aa).

D258 serves as the catalytic Proton donor.

It belongs to the eIF-2B alpha/beta/delta subunits family. MtnA subfamily.

The protein localises to the cytoplasm. The protein resides in the nucleus. It carries out the reaction 5-(methylsulfanyl)-alpha-D-ribose 1-phosphate = 5-(methylsulfanyl)-D-ribulose 1-phosphate. The protein operates within amino-acid biosynthesis; L-methionine biosynthesis via salvage pathway; L-methionine from S-methyl-5-thio-alpha-D-ribose 1-phosphate: step 1/6. Catalyzes the interconversion of methylthioribose-1-phosphate (MTR-1-P) into methylthioribulose-1-phosphate (MTRu-1-P). The protein is Methylthioribose-1-phosphate isomerase of Chaetomium globosum (strain ATCC 6205 / CBS 148.51 / DSM 1962 / NBRC 6347 / NRRL 1970) (Soil fungus).